The sequence spans 143 residues: Putative phosphotransferase IIA component SgcA (143 aa).

One can recognise a PTS EIIA type-2 domain in the interval Met1–Gly143. Residue His63 is the Tele-phosphohistidine intermediate of the active site.

The protein localises to the cytoplasm. Its function is as follows. The phosphoenolpyruvate-dependent sugar phosphotransferase system (sugar PTS), a major carbohydrate active -transport system, catalyzes the phosphorylation of incoming sugar substrates concomitantly with their translocation across the cell membrane. The polypeptide is Putative phosphotransferase IIA component SgcA (sgcA) (Escherichia coli (strain K12)).